Here is a 214-residue protein sequence, read N- to C-terminus: Phosphatidylcholine transfer protein (214 aa).

Residue M1 is modified to N-acetylmethionine. The START domain maps to 1-212 (MAGAACCFSD…MVKACQNYHK (212 aa)). Y72 and R78 together coordinate a 1,2-diacyl-sn-glycero-3-phosphocholine. The residue at position 139 (S139) is a Phosphoserine. Q157 contributes to the a 1,2-diacyl-sn-glycero-3-phosphocholine binding site.

As to quaternary structure, interacts with ACOT13/THEM2. As to expression, abundant in liver of pups but levels in liver decrease 10-fold about 2 weeks after birth. In adult, highly expressed in epididymis, testis, kidney and bone-marrow derived mast cells.

The protein resides in the cytoplasm. Functionally, catalyzes the transfer of phosphatidylcholine between membranes. Binds a single lipid molecule. In Mus musculus (Mouse), this protein is Phosphatidylcholine transfer protein (Pctp).